Consider the following 88-residue polypeptide: uncharacterized protein (88 aa).

The next 2 helical transmembrane spans lie at 13 to 33 (FLAF…GWGP) and 62 to 82 (WFNI…ITGI).

It is found in the cell membrane. This is an uncharacterized protein from Bacillus subtilis (strain 168).